The following is a 310-amino-acid chain: Putative HTH-type transcriptional regulatory protein M1425_1284 (310 aa).

The region spanning 125–180 is the HTH cro/C1-type domain; the sequence is LKHKREEMGYSIGDVAKFLGVSRKAIYDYEKGDSDVSLEVAEKLIDLFGDDIIGDV. A DNA-binding region (H-T-H motif) is located at residues 136 to 155; it reads IGDVAKFLGVSRKAIYDYEK.

This chain is Putative HTH-type transcriptional regulatory protein M1425_1284, found in Saccharolobus islandicus (strain M.14.25 / Kamchatka #1) (Sulfolobus islandicus).